The primary structure comprises 245 residues: Thioredoxin-like 1-2, chloroplastic (245 aa).

The N-terminal 92 residues, 1–92 (MDAISSLGTN…TNHNMLEIQS (92 aa)), are a transit peptide targeting the chloroplast. The Thioredoxin domain occupies 93–194 (ANHLVDSLLN…FKKALDKHGS (102 aa)). Active-site nucleophile residues include C117 and C120. A disulfide bridge links C117 with C120.

The protein belongs to the thioredoxin family.

The protein resides in the plastid. Its subcellular location is the chloroplast. Its function is as follows. Probable thiol-disulfide oxidoreductase that may participate in various redox reactions. In Arabidopsis thaliana (Mouse-ear cress), this protein is Thioredoxin-like 1-2, chloroplastic.